The following is a 161-amino-acid chain: Transcription antitermination protein NusB (161 aa).

Belongs to the NusB family.

Involved in transcription antitermination. Required for transcription of ribosomal RNA (rRNA) genes. Binds specifically to the boxA antiterminator sequence of the ribosomal RNA (rrn) operons. This Nitrobacter winogradskyi (strain ATCC 25391 / DSM 10237 / CIP 104748 / NCIMB 11846 / Nb-255) protein is Transcription antitermination protein NusB.